Reading from the N-terminus, the 865-residue chain is Valine--tRNA ligase (865 aa).

The short motif at 43-53 (PNITGRIHMGH) is the 'HIGH' region element. The short motif at 523 to 527 (KMSKS) is the 'KMSKS' region element. Lys526 lines the ATP pocket. The stretch at 797–865 (GLIDFEKEKE…RLESILRDLE (69 aa)) forms a coiled coil.

Belongs to the class-I aminoacyl-tRNA synthetase family. ValS type 1 subfamily. Monomer.

The protein localises to the cytoplasm. The catalysed reaction is tRNA(Val) + L-valine + ATP = L-valyl-tRNA(Val) + AMP + diphosphate. In terms of biological role, catalyzes the attachment of valine to tRNA(Val). As ValRS can inadvertently accommodate and process structurally similar amino acids such as threonine, to avoid such errors, it has a 'posttransfer' editing activity that hydrolyzes mischarged Thr-tRNA(Val) in a tRNA-dependent manner. In Thermotoga maritima (strain ATCC 43589 / DSM 3109 / JCM 10099 / NBRC 100826 / MSB8), this protein is Valine--tRNA ligase.